The chain runs to 1226 residues: Polyamine-transporting ATPase 13A3 (1226 aa).

Residues Met-1 to Lys-28 are Cytoplasmic-facing. The stretch at Leu-29–Trp-49 is an intramembrane region. Topologically, residues Met-50 to Lys-205 are cytoplasmic. Ser-98 carries the post-translational modification Phosphoserine. The chain crosses the membrane as a helical span at residues Leu-206 to Trp-226. Residues Ser-227–Tyr-232 are Lumenal-facing. Residues Tyr-233–Ile-253 form a helical membrane-spanning segment. Over Arg-254–Asp-409 the chain is Cytoplasmic. The helical transmembrane segment at Ala-410–Ile-430 threads the bilayer. Residues Asn-431–Asp-448 are Lumenal-facing. The chain crosses the membrane as a helical span at residues Ile-449–Ala-469. The Cytoplasmic portion of the chain corresponds to Gln-470 to Lys-940. Asp-498 functions as the 4-aspartylphosphate intermediate in the catalytic mechanism. 2 residues coordinate Mg(2+): Asp-498 and Thr-500. ATP contacts are provided by residues Asp-498–Thr-500, Phe-628, Arg-684, and Asp-750. Ser-817 is subject to Phosphoserine. Residue Asp-883 coordinates Mg(2+). Asp-883–Asp-887 contacts ATP. Residues Phe-941–Ser-961 traverse the membrane as a helical segment. Position 962 (Asn-962) is a topological domain, lumenal. Residues Leu-963–Met-983 traverse the membrane as a helical segment. Residues Ser-984–Ser-999 lie on the Cytoplasmic side of the membrane. The helical transmembrane segment at Gly-1000–Phe-1020 threads the bilayer. Topologically, residues Gln-1021 to Asn-1073 are lumenal. The helical transmembrane segment at Thr-1074–Gly-1094 threads the bilayer. Over Lys-1095–Tyr-1105 the chain is Cytoplasmic. The helical transmembrane segment at Phe-1106–Val-1126 threads the bilayer. Residues Ala-1127 to Arg-1143 are Lumenal-facing. The helical transmembrane segment at Val-1144 to Val-1164 threads the bilayer. Residues Asp-1165–Thr-1226 are Cytoplasmic-facing.

It belongs to the cation transport ATPase (P-type) (TC 3.A.3) family. Type V subfamily.

Its subcellular location is the recycling endosome membrane. The protein localises to the early endosome membrane. The protein resides in the late endosome membrane. It catalyses the reaction putrescine(out) + ATP + H2O = putrescine(in) + ADP + phosphate + H(+). Functionally, ATP-driven pump involved in endocytosis-dependent polyamine transport. Uses ATP as an energy source to transfer polyamine precursor putrescine from the endosomal compartment to the cytosol. The sequence is that of Polyamine-transporting ATPase 13A3 (ATP13A3) from Macaca fascicularis (Crab-eating macaque).